Reading from the N-terminus, the 330-residue chain is Flotillin-like protein FloA (330 aa).

2 consecutive transmembrane segments (helical) span residues 3-23 and 26-46; these read IISVIVIGGLVLVAIVATLYM and LRLWIAAQASGAGVSMLTLIA.

Belongs to the flotillin-like FloA family. In terms of assembly, homooligomerizes.

It is found in the cell membrane. It localises to the membrane raft. Functionally, found in functional membrane microdomains (FMM) that may be equivalent to eukaryotic membrane rafts. FMMs are highly dynamic and increase in number as cells age. Flotillins are thought to be important factors in membrane fluidity. This is Flotillin-like protein FloA from Sorangium cellulosum (strain So ce56) (Polyangium cellulosum (strain So ce56)).